A 376-amino-acid polypeptide reads, in one-letter code: Transmembrane protein 183A (376 aa).

Disordered stretches follow at residues 1 to 20 and 100 to 127; these read MARG…AMPK and MDAQ…ELDG. A helical transmembrane segment spans residues 300 to 320; sequence LNFIFIPIVMGMIFTLFTINV.

Belongs to the TMEM183 family.

Its subcellular location is the membrane. The protein is Transmembrane protein 183A (TMEM183A) of Homo sapiens (Human).